The chain runs to 132 residues: Small ribosomal subunit protein uS8 (132 aa).

Belongs to the universal ribosomal protein uS8 family. Part of the 30S ribosomal subunit. Contacts proteins S5 and S12.

In terms of biological role, one of the primary rRNA binding proteins, it binds directly to 16S rRNA central domain where it helps coordinate assembly of the platform of the 30S subunit. This is Small ribosomal subunit protein uS8 from Psychrobacter arcticus (strain DSM 17307 / VKM B-2377 / 273-4).